A 957-amino-acid polypeptide reads, in one-letter code: Glycine dehydrogenase (decarboxylating) (957 aa).

Lys-708 is modified (N6-(pyridoxal phosphate)lysine).

Belongs to the GcvP family. As to quaternary structure, the glycine cleavage system is composed of four proteins: P, T, L and H. Requires pyridoxal 5'-phosphate as cofactor.

The catalysed reaction is N(6)-[(R)-lipoyl]-L-lysyl-[glycine-cleavage complex H protein] + glycine + H(+) = N(6)-[(R)-S(8)-aminomethyldihydrolipoyl]-L-lysyl-[glycine-cleavage complex H protein] + CO2. Its function is as follows. The glycine cleavage system catalyzes the degradation of glycine. The P protein binds the alpha-amino group of glycine through its pyridoxal phosphate cofactor; CO(2) is released and the remaining methylamine moiety is then transferred to the lipoamide cofactor of the H protein. This is Glycine dehydrogenase (decarboxylating) from Salmonella heidelberg (strain SL476).